We begin with the raw amino-acid sequence, 74 residues long: Conotoxin Vt11.7 (74 aa).

Residues 1-26 form the signal peptide; sequence MMFRLTSVGCFLLVIVLLNVAVLTNA. Cystine bridges form between Cys28–Cys42, Cys35–Cys47, Cys41–Cys51, and Cys46–Cys55. A propeptide spanning residues 62-74 is cleaved from the precursor; that stretch reads AHGHGLLRFWGQR.

This sequence belongs to the conotoxin I2 superfamily. In terms of tissue distribution, expressed by the venom duct.

The protein resides in the secreted. In Conus planorbis (Planorbis cone), this protein is Conotoxin Vt11.7.